We begin with the raw amino-acid sequence, 200 residues long: Protein GrpE (200 aa).

This sequence belongs to the GrpE family. In terms of assembly, homodimer.

It is found in the cytoplasm. Functionally, participates actively in the response to hyperosmotic and heat shock by preventing the aggregation of stress-denatured proteins, in association with DnaK and GrpE. It is the nucleotide exchange factor for DnaK and may function as a thermosensor. Unfolded proteins bind initially to DnaJ; upon interaction with the DnaJ-bound protein, DnaK hydrolyzes its bound ATP, resulting in the formation of a stable complex. GrpE releases ADP from DnaK; ATP binding to DnaK triggers the release of the substrate protein, thus completing the reaction cycle. Several rounds of ATP-dependent interactions between DnaJ, DnaK and GrpE are required for fully efficient folding. The protein is Protein GrpE of Geobacter sulfurreducens (strain ATCC 51573 / DSM 12127 / PCA).